Reading from the N-terminus, the 207-residue chain is Serotonin N-acetyltransferase (207 aa).

Residues 1 to 28 (MSTQSTHPLKPEAPRLPPGIPESPSCQR) form a disordered region. Thr-31 carries the phosphothreonine; by PKA modification. One can recognise an N-acetyltransferase domain in the interval 35–194 (SEFRCLTPED…SLTFMELHCS (160 aa)). Leu-124 contacts substrate. Residues 124-126 (LAV) and 132-137 (QQGRGP) each bind acetyl-CoA. Met-159 serves as a coordination point for substrate. 168–170 (YER) provides a ligand contact to acetyl-CoA. A Phosphoserine modification is found at Ser-205.

The protein belongs to the acetyltransferase family. AANAT subfamily. Monomer. Interacts with several 14-3-3 proteins, including YWHAB, YWHAE, YWHAG and YWHAZ, preferentially when phosphorylated at Thr-31. Phosphorylation on Ser-205 also allows binding to YWHAZ, but with lower affinity. The interaction with YWHAZ considerably increases affinity for arylalkylamines and acetyl-CoA and protects the enzyme from dephosphorylation and proteasomal degradation. It may also prevent thiol-dependent inactivation. In terms of processing, cAMP-dependent phosphorylation on both N-terminal Thr-31 and C-terminal Ser-205 regulates AANAT activity by promoting interaction with 14-3-3 proteins. In terms of tissue distribution, highly expressed in pineal gland and at lower levels in the retina. Weak expression in several brain regions and in the pituitary gland.

Its subcellular location is the cytoplasm. The enzyme catalyses a 2-arylethylamine + acetyl-CoA = an N-acetyl-2-arylethylamine + CoA + H(+). It participates in aromatic compound metabolism; melatonin biosynthesis; melatonin from serotonin: step 1/2. Controls the night/day rhythm of melatonin production in the pineal gland. Catalyzes the N-acetylation of serotonin into N-acetylserotonin, the penultimate step in the synthesis of melatonin. In Homo sapiens (Human), this protein is Serotonin N-acetyltransferase (AANAT).